Consider the following 159-residue polypeptide: Aspartate carbamoyltransferase regulatory chain (159 aa).

Zn(2+) is bound by residues C111, C116, C141, and C144.

Belongs to the PyrI family. Contains catalytic and regulatory chains. The cofactor is Zn(2+).

Functionally, involved in allosteric regulation of aspartate carbamoyltransferase. This Aeropyrum pernix (strain ATCC 700893 / DSM 11879 / JCM 9820 / NBRC 100138 / K1) protein is Aspartate carbamoyltransferase regulatory chain.